The following is a 359-amino-acid chain: Peptide chain release factor 1 (359 aa).

Gln235 carries the post-translational modification N5-methylglutamine.

Belongs to the prokaryotic/mitochondrial release factor family. Methylated by PrmC. Methylation increases the termination efficiency of RF1.

The protein resides in the cytoplasm. Functionally, peptide chain release factor 1 directs the termination of translation in response to the peptide chain termination codons UAG and UAA. The sequence is that of Peptide chain release factor 1 from Ehrlichia ruminantium (strain Gardel).